The following is a 444-amino-acid chain: Alpha-(1,3)-fucosyltransferase B (444 aa).

At 1–6 the chain is on the cytoplasmic side; the sequence is MRLAQR. The chain crosses the membrane as a helical; Signal-anchor for type II membrane protein span at residues 7–27; it reads YGIALVALLMVGATVLFFWSE. The Lumenal segment spans residues 28 to 444; sequence NIINYENIKF…GNNCSNSSNT (417 aa). Residues Asn279, Asn437, and Asn440 are each glycosylated (N-linked (GlcNAc...) asparagine).

The protein belongs to the glycosyltransferase 10 family.

The protein localises to the golgi apparatus. Its subcellular location is the golgi stack membrane. Its pathway is protein modification; protein glycosylation. In Drosophila melanogaster (Fruit fly), this protein is Alpha-(1,3)-fucosyltransferase B (FucTB).